The primary structure comprises 120 residues: Chaperonin GroEL (120 aa).

23-27 lines the ATP pocket; the sequence is DGTTT.

Belongs to the chaperonin (HSP60) family. In terms of assembly, forms a cylinder of 14 subunits composed of two heptameric rings stacked back-to-back. Interacts with the co-chaperonin GroES.

It localises to the cytoplasm. The catalysed reaction is ATP + H2O + a folded polypeptide = ADP + phosphate + an unfolded polypeptide.. Functionally, together with its co-chaperonin GroES, plays an essential role in assisting protein folding. The GroEL-GroES system forms a nano-cage that allows encapsulation of the non-native substrate proteins and provides a physical environment optimized to promote and accelerate protein folding. This Mycobacterium scrofulaceum protein is Chaperonin GroEL.